A 156-amino-acid polypeptide reads, in one-letter code: CD-NTase-associated protein 8 (156 aa).

This sequence belongs to the bacterial HORMA family. HORMA3 subfamily. As to quaternary structure, interacts with Cap7 (also called HORMA2) and CdnC; forms CdnD:Cap7:Cap8 (also called CdnD:HORMA2:HORMA3) complexes with stoichiometries of 1:1:1 and 2:1:1.

In terms of biological role, CBASS (cyclic oligonucleotide-based antiphage signaling system) provides immunity against bacteriophage. The CD-NTase protein synthesizes cyclic nucleotides in response to infection; these serve as specific second messenger signals. The signals activate a diverse range of effectors, leading to bacterial cell death and thus abortive phage infection. A type III-C(AAA) CBASS system. Its function is as follows. A member of the CBASS system in this bacteria. It does not seem to bind a closure peptide, its exact function is unknown. The chain is CD-NTase-associated protein 8 from Pseudomonas aeruginosa.